Here is a 351-residue protein sequence, read N- to C-terminus: Photosystem II D2 protein (351 aa).

Residues cysteine 39 to threonine 59 form a helical membrane-spanning segment. Histidine 116 serves as a coordination point for chlorophyll a. A helical transmembrane segment spans residues glycine 123–proline 139. 2 residues coordinate pheophytin a: glutamine 128 and asparagine 141. A helical membrane pass occupies residues valine 151 to serine 164. Position 196 (histidine 196) interacts with chlorophyll a. A helical transmembrane segment spans residues glycine 206–glutamate 226. Residues histidine 213 and phenylalanine 260 each contribute to the a plastoquinone site. Fe cation is bound at residue histidine 213. Histidine 267 is a Fe cation binding site. The helical transmembrane segment at glycine 277 to arginine 293 threads the bilayer.

It belongs to the reaction center PufL/M/PsbA/D family. In terms of assembly, PSII is composed of 1 copy each of membrane proteins PsbA, PsbB, PsbC, PsbD, PsbE, PsbF, PsbH, PsbI, PsbJ, PsbK, PsbL, PsbM, PsbT, PsbX, PsbY, PsbZ, Psb30/Ycf12, peripheral proteins PsbO, CyanoQ (PsbQ), PsbU, PsbV and a large number of cofactors. It forms dimeric complexes. The cofactor is The D1/D2 heterodimer binds P680, chlorophylls that are the primary electron donor of PSII, and subsequent electron acceptors. It shares a non-heme iron and each subunit binds pheophytin, quinone, additional chlorophylls, carotenoids and lipids. There is also a Cl(-1) ion associated with D1 and D2, which is required for oxygen evolution. The PSII complex binds additional chlorophylls, carotenoids and specific lipids..

The protein localises to the cellular thylakoid membrane. The enzyme catalyses 2 a plastoquinone + 4 hnu + 2 H2O = 2 a plastoquinol + O2. Photosystem II (PSII) is a light-driven water:plastoquinone oxidoreductase that uses light energy to abstract electrons from H(2)O, generating O(2) and a proton gradient subsequently used for ATP formation. It consists of a core antenna complex that captures photons, and an electron transfer chain that converts photonic excitation into a charge separation. The D1/D2 (PsbA/PsbD) reaction center heterodimer binds P680, the primary electron donor of PSII as well as several subsequent electron acceptors. D2 is needed for assembly of a stable PSII complex. The sequence is that of Photosystem II D2 protein from Trichormus variabilis (strain ATCC 29413 / PCC 7937) (Anabaena variabilis).